A 946-amino-acid chain; its full sequence is DNA primase (946 aa).

The disordered stretch occupies residues 596 to 626 (RDTEEDEDGKEDKNNVPDNGVFQKTTSSVDT). The segment covering 617 to 626 (FQKTTSSVDT) has biased composition (polar residues). The segment at 881–920 (CLNYTHRNPQETVQVFIDLRTEHSYALWASLWSRCFTKKC) adopts a CHC2-type zinc-finger fold.

Belongs to the herpesviridae DNA primase family. Associates with the helicase and the primase-associated factor to form the helicase-primase factor.

The protein localises to the host nucleus. Its function is as follows. Essential component of the helicase/primase complex. Unwinds the DNA at the replication forks and generates single-stranded DNA for both leading and lagging strand synthesis. The primase initiates primer synthesis and thereby produces large amount of short RNA primers on the lagging strand that the polymerase elongates using dNTPs. The polypeptide is DNA primase (UL70) (Human cytomegalovirus (strain AD169) (HHV-5)).